The sequence spans 452 residues: Phosphoglucosamine mutase (452 aa).

Ser104 serves as the catalytic Phosphoserine intermediate. Mg(2+) is bound by residues Ser104, Asp241, Asp243, and Asp245. Residue Ser104 is modified to Phosphoserine.

This sequence belongs to the phosphohexose mutase family. Mg(2+) serves as cofactor. Activated by phosphorylation.

The enzyme catalyses alpha-D-glucosamine 1-phosphate = D-glucosamine 6-phosphate. Catalyzes the conversion of glucosamine-6-phosphate to glucosamine-1-phosphate. This Arthrobacter sp. (strain FB24) protein is Phosphoglucosamine mutase.